Reading from the N-terminus, the 963-residue chain is Probable sucrose-phosphate synthase 2 (963 aa).

A disordered region spans residues 111–150 (KLRTDTNADMSEDLFEGEKGEDAGDPSVAYGDSTTGSSPK).

This sequence belongs to the glycosyltransferase 1 family. As to quaternary structure, homodimer or homotetramer. In terms of tissue distribution, expressed in germinating seeds.

It catalyses the reaction beta-D-fructose 6-phosphate + UDP-alpha-D-glucose = sucrose 6(F)-phosphate + UDP + H(+). The protein operates within glycan biosynthesis; sucrose biosynthesis; sucrose from D-fructose 6-phosphate and UDP-alpha-D-glucose: step 1/2. With respect to regulation, activity is regulated by phosphorylation and moderated by concentration of metabolites and light. Its function is as follows. Plays a role in photosynthetic sucrose synthesis by catalyzing the rate-limiting step of sucrose biosynthesis from UDP-glucose and fructose- 6-phosphate. Involved in the regulation of carbon partitioning in the leaves of plants. May regulate the synthesis of sucrose and therefore play a major role as a limiting factor in the export of photoassimilates out of the leaf. Plays a role for sucrose availability that is essential for plant growth and fiber elongation. This Oryza sativa subsp. japonica (Rice) protein is Probable sucrose-phosphate synthase 2 (SPS2).